The following is an 884-amino-acid chain: DNA mismatch repair protein MutS (884 aa).

643 to 650 (GPNMGGKS) contacts ATP.

This sequence belongs to the DNA mismatch repair MutS family.

This protein is involved in the repair of mismatches in DNA. It is possible that it carries out the mismatch recognition step. This protein has a weak ATPase activity. The sequence is that of DNA mismatch repair protein MutS from Methylobacillus flagellatus (strain ATCC 51484 / DSM 6875 / VKM B-1610 / KT).